The following is a 164-amino-acid chain: HTH-type transcriptional regulator IscR (164 aa).

The HTH rrf2-type domain occupies R2–N131. The H-T-H motif DNA-binding region spans L28 to K51. Positions 92, 98, and 104 each coordinate [2Fe-2S] cluster.

Requires [2Fe-2S] cluster as cofactor.

Functionally, regulates the transcription of several operons and genes involved in the biogenesis of Fe-S clusters and Fe-S-containing proteins. The protein is HTH-type transcriptional regulator IscR of Salmonella agona (strain SL483).